A 926-amino-acid chain; its full sequence is DNA mismatch repair protein MutS (926 aa).

The segment at 1–67 is disordered; the sequence is MAASPNPLQG…NPNQINDLDQ (67 aa). 2 stretches are compositionally biased toward polar residues: residues 18–44 and 57–67; these read QSTT…QLKS and KNPNQINDLDQ. 726 to 733 provides a ligand contact to ATP; that stretch reads GPNASGKS.

It belongs to the DNA mismatch repair MutS family.

Its function is as follows. This protein is involved in the repair of mismatches in DNA. It is possible that it carries out the mismatch recognition step. This protein has a weak ATPase activity. The sequence is that of DNA mismatch repair protein MutS from Prochlorococcus marinus (strain NATL1A).